The chain runs to 306 residues: Agmatinase (306 aa).

The Mn(2+) site is built by H126, D149, H151, D153, D230, and D232.

The protein belongs to the arginase family. Agmatinase subfamily. Mn(2+) serves as cofactor.

The enzyme catalyses agmatine + H2O = urea + putrescine. It functions in the pathway amine and polyamine biosynthesis; putrescine biosynthesis via agmatine pathway; putrescine from agmatine: step 1/1. Its function is as follows. Catalyzes the formation of putrescine from agmatine. This is Agmatinase from Escherichia coli (strain K12 / DH10B).